The sequence spans 1023 residues: 2-oxoglutarate dehydrogenase complex component E1 (1023 aa).

The N-terminal 40 residues, 1-40 (MFHLRTCAAKLRPLTASQTVKTFSQNRPAAARTFQQIRCY), are a transit peptide targeting the mitochondrion. Lys74 bears the N6-succinyllysine mark. Position 100 is a phosphoserine (Ser100). Ca(2+) contacts are provided by His143, Asp156, and Asp158. Arg312 lines the thiamine diphosphate pocket. Residue Lys401 is modified to N6-acetyllysine. Thiamine diphosphate contacts are provided by Asp411, Asn444, and Ile446. Residues Asp411, Asn444, and Ile446 each coordinate Mg(2+). A Glycyl lysine isopeptide (Lys-Gly) (interchain with G-Cter in ubiquitin) cross-link involves residue Lys534. The residue at position 564 (Lys564) is an N6-succinyllysine. Gln676 serves as a coordination point for thiamine diphosphate. Lys970 carries the N6-acetyllysine modification.

It belongs to the alpha-ketoglutarate dehydrogenase family. As to quaternary structure, homodimer. The 2-oxoglutarate dehydrogenase complex is composed of OGDH (2-oxoglutarate dehydrogenase; E1), DLST (dihydrolipoamide succinyltransferase; E2), DLD (dihydrolipoamide dehydrogenase; E3) and the assembly factor KGD4. It contains multiple copies of the three enzymatic components (E1, E2 and E3). In the nucleus, the 2-oxoglutarate dehydrogenase complex associates with KAT2A. Interacts with ABHD11; this interaction maintains the functional lipoylation of the 2-oxoglutarate dehydrogenase complex. Thiamine diphosphate is required as a cofactor. Requires Mg(2+) as cofactor.

The protein localises to the mitochondrion. It is found in the nucleus. The catalysed reaction is N(6)-[(R)-lipoyl]-L-lysyl-[protein] + 2-oxoglutarate + H(+) = N(6)-[(R)-S(8)-succinyldihydrolipoyl]-L-lysyl-[protein] + CO2. Calcium ions and ADP stimulate, whereas ATP and NADH reduce catalytic activity. In terms of biological role, 2-oxoglutarate dehydrogenase (E1o) component of the 2-oxoglutarate dehydrogenase complex (OGDHC). Participates in the first step, rate limiting for the overall conversion of 2-oxoglutarate to succinyl-CoA and CO(2) catalyzed by the whole OGDHC. Catalyzes the irreversible decarboxylation of 2-oxoglutarate (alpha-ketoglutarate) via the thiamine diphosphate (ThDP) cofactor and subsequent transfer of the decarboxylated acyl intermediate on an oxidized dihydrolipoyl group that is covalently amidated to the E2 enzyme (dihydrolipoyllysine-residue succinyltransferase or DLST). Plays a key role in the Krebs (citric acid) cycle, which is a common pathway for oxidation of fuel molecules, including carbohydrates, fatty acids, and amino acids. Can catalyze the decarboxylation of 2-oxoadipate in vitro, but at a much lower rate than 2-oxoglutarate. Mainly active in the mitochondrion. A fraction of the 2-oxoglutarate dehydrogenase complex also localizes in the nucleus and is required for lysine succinylation of histones: associates with KAT2A on chromatin and provides succinyl-CoA to histone succinyltransferase KAT2A. This Pongo abelii (Sumatran orangutan) protein is 2-oxoglutarate dehydrogenase complex component E1.